A 162-amino-acid polypeptide reads, in one-letter code: Precorrin-2 dehydrogenase (162 aa).

NAD(+)-binding positions include 20 to 21 (SI) and 41 to 42 (PD).

This sequence belongs to the precorrin-2 dehydrogenase / sirohydrochlorin ferrochelatase family.

The catalysed reaction is precorrin-2 + NAD(+) = sirohydrochlorin + NADH + 2 H(+). It functions in the pathway cofactor biosynthesis; adenosylcobalamin biosynthesis; sirohydrochlorin from precorrin-2: step 1/1. Its pathway is porphyrin-containing compound metabolism; siroheme biosynthesis; sirohydrochlorin from precorrin-2: step 1/1. Catalyzes the dehydrogenation of precorrin-2 to form sirohydrochlorin which is used as a precursor in both siroheme biosynthesis and in the anaerobic branch of adenosylcobalamin biosynthesis. In Bacillus subtilis (strain 168), this protein is Precorrin-2 dehydrogenase (sirC).